Reading from the N-terminus, the 228-residue chain is Sugar fermentation stimulation protein homolog (228 aa).

It belongs to the SfsA family.

This Desulfitobacterium hafniense (strain DSM 10664 / DCB-2) protein is Sugar fermentation stimulation protein homolog.